Reading from the N-terminus, the 279-residue chain is Methyltransferase ausD (279 aa).

S-adenosyl-L-methionine-binding positions include 124–125, 152–153, and Arg244; these read DL and DI.

It belongs to the class I-like SAM-binding methyltransferase superfamily. In terms of assembly, homodimer.

The protein operates within secondary metabolite biosynthesis; terpenoid biosynthesis. Its function is as follows. Methyltransferase; part of the gene cluster that mediates the biosynthesis of calidodehydroaustin, a fungal meroterpenoid. The first step of the pathway is the synthesis of 3,5-dimethylorsellinic acid by the polyketide synthase ausA. 3,5-dimethylorsellinic acid is then prenylated by the polyprenyl transferase ausN. Further epoxidation by the FAD-dependent monooxygenase ausM and cyclization by the probable terpene cyclase ausL lead to the formation of protoaustinoid A. Protoaustinoid A is then oxidized to spiro-lactone preaustinoid A3 by the combined action of the FAD-binding monooxygenases ausB and ausC, and the dioxygenase ausE. Acid-catalyzed keto-rearrangement and ring contraction of the tetraketide portion of preaustinoid A3 by ausJ lead to the formation of preaustinoid A4. The aldo-keto reductase ausK, with the help of ausH, is involved in the next step by transforming preaustinoid A4 into isoaustinone which is in turn hydroxylated by the P450 monooxygenase ausI to form austinolide. The cytochrome P450 monooxygenase ausG modifies austinolide to austinol. Austinol is further acetylated to austin by the O-acetyltransferase ausP, which spontaneously changes to dehydroaustin. The cytochrome P450 monooxygenase ausR then converts dehydroaustin is into 7-dehydrodehydroaustin. The hydroxylation catalyzed by ausR permits the O-acetyltransferase ausQ to add an additional acetyl group to the molecule, leading to the formation of acetoxydehydroaustin. The short chain dehydrogenase ausT catalyzes the reduction of the double bond present between carbon atoms 1 and 2 to convert 7-dehydrodehydroaustin into 1,2-dihydro-7-hydroxydehydroaustin. AusQ catalyzes not only an acetylation reaction but also the addition of the PKS ausV diketide product to 1,2-dihydro-7-hydroxydehydroaustin, forming precalidodehydroaustin. Finally, the iron/alpha-ketoglutarate-dependent dioxygenase converts precalidodehydroaustin into calidodehydroaustin. This is Methyltransferase ausD from Aspergillus calidoustus.